Here is a 454-residue protein sequence, read N- to C-terminus: Transmembrane GTPase fzo (454 aa).

Residues 1 to 111 (SSMEPEMEQK…NQLKSTLISP (111 aa)) enclose the Dynamin-type G domain. Topologically, residues 1 to 322 (SSMEPEMEQK…QMLESLVKSK (322 aa)) are cytoplasmic. A G5 motif region spans residues 30 to 33 (YSTA). S44 is a GTP binding site. The stretch at 112 to 162 (FIEKVSRLIDENKERRANLNAEIEEWELEMQDEREDLQYCFEELTEMTQRL) forms a coiled coil. A helical transmembrane segment spans residues 323 to 335 (GSLGTVLLGAMAI). Over 336-338 (RSF) the chain is Mitochondrial intermembrane. The helical transmembrane segment at 339–361 (NWPIVMILGGLVGSFYMYEYAAW) threads the bilayer. Over 362–454 (TTAAQERSFK…DKGQLLASRL (93 aa)) the chain is Cytoplasmic. Residues 411–434 (QSNETLNDLNVRTAELTKQIQSME) are a coiled coil.

The protein belongs to the TRAFAC class dynamin-like GTPase superfamily. Dynamin/Fzo/YdjA family. Mitofusin subfamily.

Its subcellular location is the mitochondrion outer membrane. It carries out the reaction GTP + H2O = GDP + phosphate + H(+). Essential transmembrane GTPase, which mediates mitochondrial fusion during spermatogenesis. In early spermatocytes, fusion of mitochondria give rise to two organelles named Nebenkern and constitutes an important step in mitochondria morphology, which is balanced between fusion and fission. Essential for fertility. The chain is Transmembrane GTPase fzo (fzo) from Drosophila simulans (Fruit fly).